A 205-amino-acid chain; its full sequence is Beta-crystallin B2 (205 aa).

Residue Ala2 is modified to N-acetylalanine. The N-terminal arm stretch occupies residues 2–16 (ASDHQTQAGKPQPLN). Beta/gamma crystallin 'Greek key' domains follow at residues 17-56 (PKIIIFEQENFQGHSHELNGPCPNLKETGVEKAGSVLVQA) and 57-101 (GPWV…RPIK). Residues 102 to 106 (VDSQE) are connecting peptide. Beta/gamma crystallin 'Greek key' domains lie at 107-148 (HKII…RVQS) and 149-191 (GTWV…RRIR). A C-terminal arm region spans residues 193–205 (MQWHQRGAFHPTN).

This sequence belongs to the beta/gamma-crystallin family. As to quaternary structure, homo/heterodimer, or complexes of higher-order. The structure of beta-crystallin oligomers seems to be stabilized through interactions between the N-terminal arms.

In terms of biological role, crystallins are the dominant structural components of the vertebrate eye lens. The chain is Beta-crystallin B2 (CRYBB2) from Oryctolagus cuniculus (Rabbit).